A 515-amino-acid chain; its full sequence is MEELQGYLEEYRSRQQQFLYPLLFQEYIYVFAYDHGLNSSIFYEPQNSLGYDNKFSSVLVKRLIIRMYQKNYWIYSVNDIYQNIFVGHNNYFYFHFFSQILSEGFAVIVEIPFSLQLISSLEEKEIPKSHNLQSSHSIFPFLEDKLLHLNYLSDILIPYPAHMEILVQMLQSWIQDALSLHLLQFLLHEYYNWNSLIIPNKSIYVFSKDNKRLFCFLYNLYIYEYEFLLVFPCKQSSFLRLISSGVLLERIHFYVKIEHLGVCRIFCQKTLWIFKDPFIHYIRYQGKSILGSRGTHFLMKKWKYHLVHFWQYYFHFWSQPYRIDTKKLSNYSFYFLGYFSSVQMNSSMVRNQMLENSFLMDTLTKKLDTRIPIIPLIRSLSKAQFCTVSGYPISKPIWTDLADCDIINRFGRICRKLSHYHSGSSKKQSLYRMKYILRLSCARTLARKHKSSARSFLQRLSSGLLEEFFTEEEQVISLIFPKRTSFYLYGSYRERIWYLDIIRINDLVNSLLVTT.

It belongs to the intron maturase 2 family. MatK subfamily.

It is found in the plastid. Its subcellular location is the chloroplast. In terms of biological role, usually encoded in the trnK tRNA gene intron. Probably assists in splicing its own and other chloroplast group II introns. This chain is Maturase K, found in Alpinia calcarata (Snap ginger).